A 329-amino-acid chain; its full sequence is Short-chain dehydrogenase/reductase prx4 (329 aa).

Positions 1–21 are cleaved as a signal peptide; the sequence is MIPRWQPASIALLLHLDTLRC. 3 residues coordinate NADP(+): Ser58, Ile60, and Asn81. The N-linked (GlcNAc...) asparagine glycan is linked to Asn91. NADP(+)-binding residues include Asp98, Asn121, Lys161, Tyr194, Lys198, and Thr229. The Proton acceptor role is filled by Tyr194. Lys198 (lowers pKa of active site Tyr) is an active-site residue. The helical transmembrane segment at 238-258 threads the bilayer; the sequence is GPLMAAGLPVSSAHMVGLAVV.

Belongs to the short-chain dehydrogenases/reductases (SDR) family.

It localises to the membrane. Its pathway is sesquiterpene biosynthesis. Functionally, short-chain dehydrogenase/reductase; part of the gene cluster that mediates the biosynthesis of PR-toxin, a bicyclic sesquiterpene belonging to the eremophilane class and acting as a mycotoxin. The first step of the pathway is catalyzed by the aristolochene synthase which performs the cyclization of trans,trans-farnesyl diphosphate (FPP) to the bicyclic sesquiterpene aristolochene. Following the formation of aristolochene, the non-oxygenated aristolochene is converted to the trioxygenated intermediate eremofortin B, via 7-epi-neopetasone. This conversion appears to involve three enzymes, a hydroxysterol oxidase-like enzyme, the quinone-oxidase prx3 that forms the quinone-type-structure in the bicyclic nucleus of aristolochene with the C8-oxo group and the C-3 hydroxyl group, and the P450 monooxygenase prx9 that introduces the epoxide at the double bond between carbons 1 and 2. No monoxy or dioxy-intermediates have been reported to be released to the broth, so these three early oxidative reactions may be coupled together. Eremofortin B is further oxidized by another P450 monooxygenase, that introduces a second epoxide between carbons 7 and 11 prior to acetylation to eremofortin A by the acetyltransferase prx11. The second epoxidation may be performed by a second P450 monooxygenase. After the acetylation step, eremofortin A is converted to eremofortin C and then to PR-toxin. First the conversion of eremofortin A to eremofortin C proceeds by oxidation of the side chain of the molecule at C-12 and is catalyzed by the short-chain oxidoreductase prx1. The cytochrome P450 monooxygenase prx8 also plays a role in this step. The primary alcohol formed at C-12 is finally oxidized by the short-chain alcohol dehydrogenase prx4 that forms PR-toxin. This Penicillium rubens (strain ATCC 28089 / DSM 1075 / NRRL 1951 / Wisconsin 54-1255) (Penicillium chrysogenum) protein is Short-chain dehydrogenase/reductase prx4.